A 94-amino-acid chain; its full sequence is MKWGALLCIFGFLAFCSVLDRGLGWIPDIWQKCSSKNEEFQQCGSSCPETCANHKNPEPKSCAAVCFVGCVCKPGFIRDDLKGSICVKPEDCSK.

Positions 1 to 24 (MKWGALLCIFGFLAFCSVLDRGLG) are cleaved as a signal peptide. Positions 25 to 30 (WIPDIW) are excised as a propeptide. Cystine bridges form between cysteine 33–cysteine 70, cysteine 43–cysteine 66, cysteine 47–cysteine 62, cysteine 51–cysteine 92, and cysteine 72–cysteine 86. In terms of domain architecture, TIL spans 33 to 92 (CSSKNEEFQQCGSSCPETCANHKNPEPKSCAAVCFVGCVCKPGFIRDDLKGSICVKPEDC). The protease binding loop stretch occupies residues 63 to 65 (AAV).

Belongs to the serine protease inhibitor-like (TIL domain-containing) family. As to expression, expressed by the venom gland.

The protein resides in the secreted. Functionally, recombinant protein inhibits both alpha-chymotrypsin (Ki=97.1 nM) and elastase (Ki=3700 nM). This chain is Venom peptide SjAPI, found in Scorpiops jendeki (Scorpion).